A 237-amino-acid polypeptide reads, in one-letter code: Ribonuclease 3 (237 aa).

Positions 4-130 (IQILFQTLNI…LFGAIYLDLG (127 aa)) constitute an RNase III domain. Glu45 serves as a coordination point for Mg(2+). Residue Asp49 is part of the active site. Positions 116 and 119 each coordinate Mg(2+). Glu119 is an active-site residue. In terms of domain architecture, DRBM spans 154–222 (DFKTQLQEIV…AQQALSKVAK (69 aa)).

Belongs to the ribonuclease III family. In terms of assembly, homodimer. It depends on Mg(2+) as a cofactor.

The protein resides in the cytoplasm. The enzyme catalyses Endonucleolytic cleavage to 5'-phosphomonoester.. Digests double-stranded RNA. Involved in the processing of primary rRNA transcript to yield the immediate precursors to the large and small rRNAs (23S and 16S). Processes some mRNAs, and tRNAs when they are encoded in the rRNA operon. Processes pre-crRNA and tracrRNA of type II CRISPR loci if present in the organism. This Aster yellows witches'-broom phytoplasma (strain AYWB) protein is Ribonuclease 3.